The following is a 583-amino-acid chain: Bifunctional dihydrofolate reductase-thymidylate synthase (583 aa).

In terms of domain architecture, DHFR spans Asp9 to Lys229. Gly36 to Gly42 serves as a coordination point for NADP(+). Asp51 contacts substrate. Residues Lys104 to Ser106 and Leu125 to Thr128 contribute to the NADP(+) site. Positions 165, 171, and 186 each coordinate substrate. Gly166–Glu173 is an NADP(+) binding site. The interval His298 to Ala583 is thymidylate synthase. DUMP is bound at residue Arg320. Residue Cys465 is part of the active site. Residues His466, Gln484 to Asp488, Asn496, and His526 to Tyr528 contribute to the dUMP site.

In the N-terminal section; belongs to the dihydrofolate reductase family. It in the C-terminal section; belongs to the thymidylate synthase family. Homodimer.

It carries out the reaction (6S)-5,6,7,8-tetrahydrofolate + NADP(+) = 7,8-dihydrofolate + NADPH + H(+). The catalysed reaction is dUMP + (6R)-5,10-methylene-5,6,7,8-tetrahydrofolate = 7,8-dihydrofolate + dTMP. It participates in cofactor biosynthesis; tetrahydrofolate biosynthesis; 5,6,7,8-tetrahydrofolate from 7,8-dihydrofolate: step 1/1. Functionally, bifunctional enzyme. Involved in de novo dTMP biosynthesis. Key enzyme in folate metabolism. Catalyzes an essential reaction for de novo glycine and purine synthesis, DNA precursor synthesis, and for the conversion of dUMP to dTMP. The protein is Bifunctional dihydrofolate reductase-thymidylate synthase of Plasmodium chabaudi.